The chain runs to 437 residues: Bile acid CoA-transferase BaiK (437 aa).

Asp171 acts as the Nucleophile in catalysis.

The protein belongs to the CoA-transferase III family.

The enzyme catalyses deoxycholoyl-CoA + cholate = choloyl-CoA + deoxycholate. It catalyses the reaction allodeoxycholoyl-CoA + cholate = allodeoxycholate + choloyl-CoA. It carries out the reaction allocholate + deoxycholoyl-CoA = allocholoyl-CoA + deoxycholate. The catalysed reaction is allocholate + allodeoxycholoyl-CoA = allocholoyl-CoA + allodeoxycholate. The enzyme catalyses ursodeoxycholate + deoxycholoyl-CoA = ursodeoxycholoyl-CoA + deoxycholate. It catalyses the reaction allodeoxycholoyl-CoA + ursodeoxycholate = ursodeoxycholoyl-CoA + allodeoxycholate. It participates in lipid metabolism; bile acid biosynthesis. In terms of biological role, functions in the bile acid 7alpha-dehydroxylation pathway, which forms secondary bile acids via the 7alpha-dehydroxylation of primary bile acids, and is carried out by intestinal anaerobic bacteria. Acts as a bile acid CoA transferase with broad bile acid substrate specificity. Catalyzes the transfer of the CoA moiety of secondary bile acid-CoA compounds to primary bile acids. Can use deoxycholoyl-CoA and allodeoxycholoyl-CoA as bile acid CoA donors and cholate, allocholate and ursodeoxycholate as bile acid CoA acceptors. Shows no activity when lithocholoyl-CoA is used as the CoA donor. The polypeptide is Bile acid CoA-transferase BaiK (Clostridium scindens (strain JCM 10418 / VPI 12708)).